The following is a 197-amino-acid chain: Probable host range protein 2 (197 aa).

Positions 172-197 (DHDDNDNADDDEEDDDEVNDIEDDYE) are disordered. Over residues 174-197 (DDNDNADDDEEDDDEVNDIEDDYE) the composition is skewed to acidic residues.

It belongs to the poxviridae C7 protein family.

In Ovis aries (Sheep), this protein is Probable host range protein 2.